Consider the following 356-residue polypeptide: GTPase Obg (356 aa).

In terms of domain architecture, Obg spans 1–159 (MKFLDEAKVY…RWIWLRMKLI (159 aa)). Residues 160–327 (ADAGLVGLPN…ALRKLADVIS (168 aa)) enclose the OBG-type G domain. GTP contacts are provided by residues 166–173 (GLPNAGKS), 191–195 (FTTLH), 212–215 (DIPG), 279–282 (NKID), and 308–310 (SGA). Mg(2+) contacts are provided by serine 173 and threonine 193. A disordered region spans residues 332–356 (SIKAKSTSDSAATEEPWAAPLPPQG).

The protein belongs to the TRAFAC class OBG-HflX-like GTPase superfamily. OBG GTPase family. As to quaternary structure, monomer. Requires Mg(2+) as cofactor.

It localises to the cytoplasm. Its function is as follows. An essential GTPase which binds GTP, GDP and possibly (p)ppGpp with moderate affinity, with high nucleotide exchange rates and a fairly low GTP hydrolysis rate. Plays a role in control of the cell cycle, stress response, ribosome biogenesis and in those bacteria that undergo differentiation, in morphogenesis control. This Bradyrhizobium sp. (strain BTAi1 / ATCC BAA-1182) protein is GTPase Obg.